The sequence spans 637 residues: Threonine--tRNA ligase (637 aa).

In terms of domain architecture, TGS spans 1 to 61 (MLNITLPDGS…TEDSSVQIIT (61 aa)). Positions 242–533 (DHRKLGKQLD…LIENHAGSFP (292 aa)) are catalytic. The Zn(2+) site is built by Cys-333, His-384, and His-510.

It belongs to the class-II aminoacyl-tRNA synthetase family. In terms of assembly, homodimer. The cofactor is Zn(2+).

It localises to the cytoplasm. The enzyme catalyses tRNA(Thr) + L-threonine + ATP = L-threonyl-tRNA(Thr) + AMP + diphosphate + H(+). In terms of biological role, catalyzes the attachment of threonine to tRNA(Thr) in a two-step reaction: L-threonine is first activated by ATP to form Thr-AMP and then transferred to the acceptor end of tRNA(Thr). Also edits incorrectly charged L-seryl-tRNA(Thr). The protein is Threonine--tRNA ligase of Neisseria meningitidis serogroup C (strain 053442).